We begin with the raw amino-acid sequence, 105 residues long: Synaptic plasticity regulator PANTS (105 aa).

The protein belongs to the UPF0545 family. As to quaternary structure, interacts with RTN4 isoform A/Nogo-A; the interaction results in enhanced RTN4-mediated inhibition of AMPA receptor clustering. Also interacts with NCAM1, RANBP2 and CCT8. In terms of processing, rapidly degraded by proteolysis following neuronal stimulation, resulting in increased AMPA receptor clustering. In the postnatal brain, expressed diffusely throughout the hippocampus at a low level at 8 weeks (at protein level). At 16 weeks, strongly expressed in the stratum lucidum of the hippocampus (at protein level). In developing and aging brain, expression is strongest in hippocampus, especially in areas CA3 and CA2, throughout the dorsoventral axis.

The protein localises to the synapse. It is found in the synaptic cleft. In terms of biological role, negatively regulates long-term potentiation and modulates adult synaptic plasticity. Stabilizes the interaction of RTN4 isoform A/Nogo-A with its receptors, inhibiting clustering of postsynaptic AMPA receptors at synaptic sites. Upon neuronal stimulation, degraded at synapses, reducing RTN4 signaling and allowing AMPA receptor clustering at individual synapses. In Mus musculus (Mouse), this protein is Synaptic plasticity regulator PANTS.